Consider the following 454-residue polypeptide: Metacaspase-1A (454 aa).

The span at methionine 1–histidine 16 shows a compositional bias: gly residues. Residues methionine 1–histidine 129 form a disordered region. Low complexity-rich tracts occupy residues tyrosine 38 to asparagine 47, tyrosine 59 to glutamine 80, glycine 88 to arginine 101, and glycine 109 to glycine 120. Active-site residues include histidine 244 and cysteine 300.

This sequence belongs to the peptidase C14B family.

In terms of biological role, involved in cell death (apoptosis). This is Metacaspase-1A (casA) from Neurospora crassa (strain ATCC 24698 / 74-OR23-1A / CBS 708.71 / DSM 1257 / FGSC 987).